The sequence spans 490 residues: Betaine aldehyde dehydrogenase (490 aa).

Residues Thr26, Ile27, and Asp93 each contribute to the K(+) site. Residue 150–152 (GAW) coordinates NAD(+). Lys162 acts as the Charge relay system in catalysis. 176 to 179 (KPSE) is a binding site for NAD(+). Val180 contacts K(+). Residue 230 to 233 (GVAS) participates in NAD(+) binding. Position 246 (Leu246) interacts with K(+). Catalysis depends on Glu252, which acts as the Proton acceptor. NAD(+) contacts are provided by Gly254, Cys286, and Glu387. Cys286 serves as the catalytic Nucleophile. Cys286 carries the post-translational modification Cysteine sulfenic acid (-SOH). K(+) contacts are provided by Lys457 and Gly460. Residue Glu464 is the Charge relay system of the active site.

It belongs to the aldehyde dehydrogenase family. As to quaternary structure, dimer of dimers. Requires K(+) as cofactor.

It catalyses the reaction betaine aldehyde + NAD(+) + H2O = glycine betaine + NADH + 2 H(+). The protein operates within amine and polyamine biosynthesis; betaine biosynthesis via choline pathway; betaine from betaine aldehyde: step 1/1. In terms of biological role, involved in the biosynthesis of the osmoprotectant glycine betaine. Catalyzes the irreversible oxidation of betaine aldehyde to the corresponding acid. The polypeptide is Betaine aldehyde dehydrogenase (Escherichia coli O6:H1 (strain CFT073 / ATCC 700928 / UPEC)).